The chain runs to 286 residues: Polyamine aminopropyltransferase (286 aa).

One can recognise a PABS domain in the interval 6–239; it reads PVWIDEVFED…GWWSWLYASD (234 aa). Residue Q34 coordinates S-methyl-5'-thioadenosine. Positions 65 and 89 each coordinate spermidine. S-methyl-5'-thioadenosine contacts are provided by residues E109 and 140-141; that span reads DG. The active-site Proton acceptor is the D159. Position 159 to 162 (159 to 162) interacts with spermidine; the sequence is DGSD. P166 contacts S-methyl-5'-thioadenosine.

Belongs to the spermidine/spermine synthase family. In terms of assembly, homodimer or homotetramer. Homodimer.

It localises to the cytoplasm. The catalysed reaction is S-adenosyl 3-(methylsulfanyl)propylamine + putrescine = S-methyl-5'-thioadenosine + spermidine + H(+). It functions in the pathway amine and polyamine biosynthesis; spermidine biosynthesis; spermidine from putrescine: step 1/1. In terms of biological role, catalyzes the irreversible transfer of a propylamine group from the amino donor S-adenosylmethioninamine (decarboxy-AdoMet) to putrescine (1,4-diaminobutane) to yield spermidine. The sequence is that of Polyamine aminopropyltransferase from Synechococcus elongatus (strain ATCC 33912 / PCC 7942 / FACHB-805) (Anacystis nidulans R2).